Reading from the N-terminus, the 205-residue chain is Dephospho-CoA kinase (205 aa).

The DPCK domain occupies 7-205 (IIGITGRIAS…QEIINYERFE (199 aa)). 15 to 20 (ASGKDA) provides a ligand contact to ATP.

The protein belongs to the CoaE family.

It is found in the cytoplasm. It carries out the reaction 3'-dephospho-CoA + ATP = ADP + CoA + H(+). It participates in cofactor biosynthesis; coenzyme A biosynthesis; CoA from (R)-pantothenate: step 5/5. Functionally, catalyzes the phosphorylation of the 3'-hydroxyl group of dephosphocoenzyme A to form coenzyme A. This is Dephospho-CoA kinase from Borrelia garinii subsp. bavariensis (strain ATCC BAA-2496 / DSM 23469 / PBi) (Borreliella bavariensis).